The sequence spans 142 residues: UPF0102 protein Bcep1808_0248 (142 aa).

It belongs to the UPF0102 family.

This chain is UPF0102 protein Bcep1808_0248, found in Burkholderia vietnamiensis (strain G4 / LMG 22486) (Burkholderia cepacia (strain R1808)).